The chain runs to 253 residues: Isoprenyl transferase (253 aa).

Asp-30 is a catalytic residue. A Mg(2+)-binding site is contributed by Asp-30. Substrate-binding positions include 31 to 34 (GNRR), Trp-35, His-51, and 79 to 81 (STE). The Proton acceptor role is filled by Asn-82. Residues Phe-83, Arg-85, Arg-202, and 208-210 (RVS) each bind substrate. Glu-221 serves as a coordination point for Mg(2+).

Belongs to the UPP synthase family. As to quaternary structure, homodimer. The cofactor is Mg(2+).

Its function is as follows. Catalyzes the condensation of isopentenyl diphosphate (IPP) with allylic pyrophosphates generating different type of terpenoids. The protein is Isoprenyl transferase of Chlamydia trachomatis serovar D (strain ATCC VR-885 / DSM 19411 / UW-3/Cx).